The sequence spans 430 residues: 5-methylthioadenosine/S-adenosylhomocysteine deaminase (430 aa).

2 residues coordinate Zn(2+): H63 and H65. Substrate is bound by residues E92, R144, and H182. H209 contributes to the Zn(2+) binding site. Substrate contacts are provided by E212 and D297. D297 provides a ligand contact to Zn(2+).

This sequence belongs to the metallo-dependent hydrolases superfamily. MTA/SAH deaminase family. Zn(2+) is required as a cofactor.

The enzyme catalyses S-adenosyl-L-homocysteine + H2O + H(+) = S-inosyl-L-homocysteine + NH4(+). It carries out the reaction S-methyl-5'-thioadenosine + H2O + H(+) = S-methyl-5'-thioinosine + NH4(+). In terms of biological role, catalyzes the deamination of 5-methylthioadenosine and S-adenosyl-L-homocysteine into 5-methylthioinosine and S-inosyl-L-homocysteine, respectively. Is also able to deaminate adenosine. The protein is 5-methylthioadenosine/S-adenosylhomocysteine deaminase of Desulforudis audaxviator (strain MP104C).